Reading from the N-terminus, the 181-residue chain is Large ribosomal subunit protein uL22 (181 aa).

Residues 157-181 form a disordered region; that stretch reads PEAAKKPGKKTSAVEKSKKATAATH.

Belongs to the universal ribosomal protein uL22 family.

The sequence is that of Large ribosomal subunit protein uL22 (RpL17) from Biphyllus lunatus (Beetle).